Consider the following 135-residue polypeptide: CTP pyrophosphohydrolase (135 aa).

In terms of domain architecture, Nudix hydrolase spans 2-127; that stretch reads KMIEVVAAII…DIPLLEAFMA (126 aa). Residues 34 to 39, R72, and D118 contribute to the substrate site; that span reads FAGGKV. Positions 37 to 58 match the Nudix box motif; that stretch reads GKVEPDESQRQALVRELREELG.

Belongs to the Nudix hydrolase family. In terms of assembly, monomer. The cofactor is Mg(2+). Requires Mn(2+) as cofactor.

The enzyme catalyses CTP + H2O = CMP + diphosphate + H(+). It carries out the reaction dCTP + H2O = dCMP + diphosphate + H(+). Functionally, hydrolase with a preference for pyrimidine substrates. Has high activity with 5-methyl-dCTP, and much lower activity with CTP, dCTP, 5-hydroxy-dCTP, 2-hydroxy-dATP and 8-hydroxy-dGTP. This Escherichia coli (strain K12) protein is CTP pyrophosphohydrolase (nudG).